Here is a 251-residue protein sequence, read N- to C-terminus: Imidazole glycerol phosphate synthase subunit HisF (251 aa).

Residues Asp-11 and Asp-130 contribute to the active site.

It belongs to the HisA/HisF family. As to quaternary structure, heterodimer of HisH and HisF.

The protein localises to the cytoplasm. It catalyses the reaction 5-[(5-phospho-1-deoxy-D-ribulos-1-ylimino)methylamino]-1-(5-phospho-beta-D-ribosyl)imidazole-4-carboxamide + L-glutamine = D-erythro-1-(imidazol-4-yl)glycerol 3-phosphate + 5-amino-1-(5-phospho-beta-D-ribosyl)imidazole-4-carboxamide + L-glutamate + H(+). Its pathway is amino-acid biosynthesis; L-histidine biosynthesis; L-histidine from 5-phospho-alpha-D-ribose 1-diphosphate: step 5/9. Its function is as follows. IGPS catalyzes the conversion of PRFAR and glutamine to IGP, AICAR and glutamate. The HisF subunit catalyzes the cyclization activity that produces IGP and AICAR from PRFAR using the ammonia provided by the HisH subunit. This chain is Imidazole glycerol phosphate synthase subunit HisF, found in Chlorobium chlorochromatii (strain CaD3).